The chain runs to 480 residues: 3,6-anhydro-alpha-L-galactose dehydrogenase (480 aa).

Residues 149-150 (WN), 173-176 (KPTS), and 226-227 (GS) contribute to the NADP(+) site. Catalysis depends on Glu-248, which acts as the Proton acceptor. Leu-249 provides a ligand contact to NADP(+). The active-site Nucleophile is the Cys-282. Glu-383 contacts NADP(+).

This sequence belongs to the aldehyde dehydrogenase family.

The enzyme catalyses 3,6-anhydro-alpha-L-galactopyranose + NADP(+) + H2O = 3,6-anhydro-L-galactonate + NADPH + 2 H(+). The catalysed reaction is 3,6-anhydro-alpha-L-galactopyranose + NAD(+) + H2O = 3,6-anhydro-L-galactonate + NADH + 2 H(+). In terms of biological role, involved in the degradation of 3,6-anhydro-L-galactose, which is the major monomeric sugar of red macroalgae. Catalyzes the oxidation of 3,6-anhydro-L-galactose (AHG) to form 3,6-anhydrogalactonate (AHGA). In Vibrio sp. (strain EJY3), this protein is 3,6-anhydro-alpha-L-galactose dehydrogenase.